A 199-amino-acid chain; its full sequence is Tropomyosin-1 (199 aa).

A coiled-coil region spans residues 1 to 199 (MDKIREKLSN…DEIAASLENL (199 aa)). Glycyl lysine isopeptide (Lys-Gly) (interchain with G-Cter in ubiquitin) cross-links involve residues Lys39 and Lys59. Disordered stretches follow at residues 59 to 81 (KLEAGLSDSKQTEQDNVEKENQI) and 102 to 147 (LAES…TEKL). Composition is skewed to basic and acidic residues over residues 68 to 80 (KQTEQDNVEKENQ) and 102 to 114 (LAESKQLSEDSHH). Polar residues predominate over residues 115–126 (LQSNNDNFSKKN). A compositionally biased stretch (basic and acidic residues) spans 136-147 (SDTKLKETTEKL). Lys187 participates in a covalent cross-link: Glycyl lysine isopeptide (Lys-Gly) (interchain with G-Cter in ubiquitin). The residue at position 195 (Ser195) is a Phosphoserine.

As to quaternary structure, homodimer.

The protein localises to the cytoplasm. Its subcellular location is the cytoskeleton. The polypeptide is Tropomyosin-1 (TPM1) (Saccharomyces cerevisiae (strain ATCC 204508 / S288c) (Baker's yeast)).